Here is a 443-residue protein sequence, read N- to C-terminus: Cysteine proteinase B (443 aa).

The signal sequence occupies residues 1 to 27 (MATSRAALCAVAVVCVVLAAACAPARA). A propeptide spans 28–125 (IHVGTPAAAL…YRKARADLSA (98 aa)) (activation peptide). Disulfide bonds link cysteine 147/cysteine 188 and cysteine 181/cysteine 226. Cysteine 150 is an active-site residue. Asparagine 228 carries N-linked (GlcNAc...) asparagine glycosylation. Cysteine 281 and cysteine 329 are joined by a disulfide. Residues histidine 288 and asparagine 308 contribute to the active site.

The protein belongs to the peptidase C1 family.

This chain is Cysteine proteinase B (LMCPB), found in Leishmania mexicana.